Consider the following 327-residue polypeptide: Phenylalanine--tRNA ligase alpha subunit (327 aa).

Glu252 provides a ligand contact to Mg(2+).

This sequence belongs to the class-II aminoacyl-tRNA synthetase family. Phe-tRNA synthetase alpha subunit type 1 subfamily. Tetramer of two alpha and two beta subunits. Mg(2+) is required as a cofactor.

It is found in the cytoplasm. It carries out the reaction tRNA(Phe) + L-phenylalanine + ATP = L-phenylalanyl-tRNA(Phe) + AMP + diphosphate + H(+). The chain is Phenylalanine--tRNA ligase alpha subunit from Shigella boydii serotype 18 (strain CDC 3083-94 / BS512).